Here is a 408-residue protein sequence, read N- to C-terminus: LL-diaminopimelate aminotransferase (408 aa).

Y15 and G42 together coordinate substrate. Pyridoxal 5'-phosphate is bound by residues Y72, 108–109 (AK), Y132, N186, Y217, and 245–247 (SFS). Substrate is bound by residues K109, Y132, and N186. N6-(pyridoxal phosphate)lysine is present on K248. Residues R256 and N291 each coordinate pyridoxal 5'-phosphate. Residues N291 and R386 each coordinate substrate.

It belongs to the class-I pyridoxal-phosphate-dependent aminotransferase family. LL-diaminopimelate aminotransferase subfamily. In terms of assembly, homodimer. Pyridoxal 5'-phosphate serves as cofactor.

It carries out the reaction (2S,6S)-2,6-diaminopimelate + 2-oxoglutarate = (S)-2,3,4,5-tetrahydrodipicolinate + L-glutamate + H2O + H(+). Its pathway is amino-acid biosynthesis; L-lysine biosynthesis via DAP pathway; LL-2,6-diaminopimelate from (S)-tetrahydrodipicolinate (aminotransferase route): step 1/1. In terms of biological role, involved in the synthesis of meso-diaminopimelate (m-DAP or DL-DAP), required for both lysine and peptidoglycan biosynthesis. Catalyzes the direct conversion of tetrahydrodipicolinate to LL-diaminopimelate. The chain is LL-diaminopimelate aminotransferase from Desulfotalea psychrophila (strain LSv54 / DSM 12343).